The following is a 161-amino-acid chain: Phosphopantetheine adenylyltransferase (161 aa).

S9 lines the substrate pocket. Residues 9–10 and H17 contribute to the ATP site; that span reads SF. Residues K41, T73, and R87 each contribute to the substrate site. ATP contacts are provided by residues 88–90, E98, and 123–129; these read GLR and FAHISST.

It belongs to the bacterial CoaD family. Homohexamer. Mg(2+) serves as cofactor.

It is found in the cytoplasm. The enzyme catalyses (R)-4'-phosphopantetheine + ATP + H(+) = 3'-dephospho-CoA + diphosphate. Its pathway is cofactor biosynthesis; coenzyme A biosynthesis; CoA from (R)-pantothenate: step 4/5. Reversibly transfers an adenylyl group from ATP to 4'-phosphopantetheine, yielding dephospho-CoA (dPCoA) and pyrophosphate. In Chloroflexus aggregans (strain MD-66 / DSM 9485), this protein is Phosphopantetheine adenylyltransferase.